Consider the following 286-residue polypeptide: MNFKKVSNMPDEIICNFYVNISYLEISATYDSKNKRYSLSSKTGNFNVGVKGFEKLLSIFEKIGHVMKINEKTYKIIIQNKILNLKHLYSKKNKTHTLEILDEYNNLMKLSGKKLIDVALQLFKTFKINENIENSLNVKKTENDIQIINNNQNLKIEENINDSKTKENDNKCYREIIDRVLKSRSEQLFIENLENIPPKSVIYSITGAFSFIFGLGVLCETLESGKIRWKAIILGFIILILILAIVNYLMMKEKNVDEHEYNIPTKLMEDVYTTDCENFPCGYFPK.

Transmembrane regions (helical) follow at residues 201-221 (VIYSITGAFSFIFGLGVLCET) and 231-251 (AIILGFIILILILAIVNYLMM).

It is found in the cell membrane. This is an uncharacterized protein from Methanocaldococcus jannaschii (strain ATCC 43067 / DSM 2661 / JAL-1 / JCM 10045 / NBRC 100440) (Methanococcus jannaschii).